The chain runs to 438 residues: Methylenetetrahydrofolate--tRNA-(uracil-5-)-methyltransferase TrmFO (438 aa).

10–15 (GGGLAG) serves as a coordination point for FAD.

It belongs to the MnmG family. TrmFO subfamily. The cofactor is FAD.

It is found in the cytoplasm. It carries out the reaction uridine(54) in tRNA + (6R)-5,10-methylene-5,6,7,8-tetrahydrofolate + NADH + H(+) = 5-methyluridine(54) in tRNA + (6S)-5,6,7,8-tetrahydrofolate + NAD(+). The enzyme catalyses uridine(54) in tRNA + (6R)-5,10-methylene-5,6,7,8-tetrahydrofolate + NADPH + H(+) = 5-methyluridine(54) in tRNA + (6S)-5,6,7,8-tetrahydrofolate + NADP(+). Functionally, catalyzes the folate-dependent formation of 5-methyl-uridine at position 54 (M-5-U54) in all tRNAs. This chain is Methylenetetrahydrofolate--tRNA-(uracil-5-)-methyltransferase TrmFO, found in Trichormus variabilis (strain ATCC 29413 / PCC 7937) (Anabaena variabilis).